The primary structure comprises 197 residues: Phosphoheptose isomerase (197 aa).

Positions 34 to 196 constitute an SIS domain; it reads MVHCLLGGNK…DRTLFPQDEQ (163 aa). Substrate is bound at residue 49–51; sequence NGG. Zn(2+) contacts are provided by histidine 58 and glutamate 62. Substrate contacts are provided by residues glutamate 62, 91–92, 117–119, serine 122, and glutamine 172; these read ND and STS. Zn(2+) contacts are provided by glutamine 172 and histidine 180.

Belongs to the SIS family. GmhA subfamily. Homotetramer. Requires Zn(2+) as cofactor.

It localises to the cytoplasm. It catalyses the reaction 2 D-sedoheptulose 7-phosphate = D-glycero-alpha-D-manno-heptose 7-phosphate + D-glycero-beta-D-manno-heptose 7-phosphate. It functions in the pathway carbohydrate biosynthesis; D-glycero-D-manno-heptose 7-phosphate biosynthesis; D-glycero-alpha-D-manno-heptose 7-phosphate and D-glycero-beta-D-manno-heptose 7-phosphate from sedoheptulose 7-phosphate: step 1/1. Its function is as follows. Catalyzes the isomerization of sedoheptulose 7-phosphate in D-glycero-D-manno-heptose 7-phosphate. In Shewanella baltica (strain OS223), this protein is Phosphoheptose isomerase.